Here is a 946-residue protein sequence, read N- to C-terminus: MKMSSRIGLFKLLILLFFQIYSVYAFTDGSDFTALQALKNEWDTLSKSWKSSDPCGTEWVGITCNNDNRVVSISLTNRNLKGKLPTEISTLSELQTLDLTGNPELSGPLPANIGNLRKLTFLSLMGCAFNGPIPDSIGNLEQLTRLSLNLNKFSGTIPASMGRLSKLYWFDIADNQLEGKLPVSDGASLPGLDMLLQTGHFHFGNNKLSGEIPEKLFSSEMTLLHVLFDGNQFTGSIPESLGLVQNLTVLRLDRNRLSGDIPSSLNNLTNLQELHLSDNKFTGSLPNLTSLTSLYTLDVSNNPLALSPVPSWIPFLNSLSTLRLEDIQLDGPVPTSLFSPLQLQTVSLKHNLINTTLDLGTNYSKQLDFVDLRDNFITGYKSPANNPVNVMLADNQVCQDPANQLSGYCNAVQPNSTFSTLTKCGNHCGKGKEPNQGCHCVYPLTGVFTLRSPSFSGFSNNSNFLKFGESLMTFFKNGKYPVDSVAMRNISENPTDYHLLINLLIFPSGRDRFNQTEMDSINSAFTIQDYKPPPRFGPYIFVADQYKTFSDLEDSKTVSMKVIIGVVVGVVVLLLLLALAGIYALRQKKRAQRATDQMNPFAKWDAGKNEMDAPQLMGTKAFTFEELSKCTNNFSDANDVGGGGYGQVYKGTLPNGQVIAIKRAQQGSMQGAFEFKTEIELLSRVHHKNVVKLLGFCFDQKEQMLVYEYIPNGSLRDGLSGKNGVKLDWTRRLKIALGSGKGLAYLHELADPPIIHRDVKSNNILLDEHLTAKVADFGLSKLVGDPEKAHVTTQVKGTMGYLDPEYYMTNQLTEKSDVYGFGVVMLELLTGKSPIDRGSYVVKEVKKKMDKSRNLYDLQELLDTTIIQNSGNLKGFEKYVDVALQCVEPEGVNRPTMSEVVQELESILRLVGLNPNADSATYEEASGDPYGRDSFEYTGVFPTPKP.

The first 25 residues, 1–25 (MKMSSRIGLFKLLILLFFQIYSVYA), serve as a signal peptide directing secretion. Over 26 to 561 (FTDGSDFTAL…LEDSKTVSMK (536 aa)) the chain is Extracellular. LRR repeat units follow at residues 67 to 91 (DNRV…ISTL), 92 to 116 (SELQ…IGNL), 118 to 140 (KLTF…IGNL), 141 to 164 (EQLT…MGRL), 166 to 191 (KLYW…SLPG), 195 to 219 (LLQT…LFSS), 221 to 244 (MTLL…LGLV), 245 to 268 (QNLT…LNNL), 269 to 293 (TNLQ…SLTS), 295 to 314 (YTLD…SWIP), 316 to 340 (LNSL…LFSP), 342 to 365 (QLQT…NYSK), 367 to 387 (LDFV…ANNP), and 389 to 407 (NVML…QLSG). 3 N-linked (GlcNAc...) asparagine glycosylation sites follow: N246, N267, and N287. N-linked (GlcNAc...) asparagine glycans are attached at residues N354 and N362. Residues N415, N460, N489, and N514 are each glycosylated (N-linked (GlcNAc...) asparagine). A helical membrane pass occupies residues 562–582 (VIIGVVVGVVVLLLLLALAGI). Over 583 to 946 (YALRQKKRAQ…YTGVFPTPKP (364 aa)) the chain is Cytoplasmic. One can recognise a Protein kinase domain in the interval 634 to 908 (FSDANDVGGG…EVVQELESIL (275 aa)). ATP is bound by residues 640 to 648 (VGGGGYGQV) and K662. The active-site Proton acceptor is the D758. The segment at 919-946 (SATYEEASGDPYGRDSFEYTGVFPTPKP) is disordered.

The protein belongs to the protein kinase superfamily. Ser/Thr protein kinase family.

It is found in the membrane. It catalyses the reaction L-seryl-[protein] + ATP = O-phospho-L-seryl-[protein] + ADP + H(+). The catalysed reaction is L-threonyl-[protein] + ATP = O-phospho-L-threonyl-[protein] + ADP + H(+). The protein is Probable leucine-rich repeat receptor-like protein kinase At5g49770 of Arabidopsis thaliana (Mouse-ear cress).